We begin with the raw amino-acid sequence, 177 residues long: Large ribosomal subunit protein uL6 (177 aa).

This sequence belongs to the universal ribosomal protein uL6 family. As to quaternary structure, part of the 50S ribosomal subunit.

In terms of biological role, this protein binds to the 23S rRNA, and is important in its secondary structure. It is located near the subunit interface in the base of the L7/L12 stalk, and near the tRNA binding site of the peptidyltransferase center. The polypeptide is Large ribosomal subunit protein uL6 (Bradyrhizobium sp. (strain ORS 278)).